We begin with the raw amino-acid sequence, 325 residues long: ATP synthase gamma chain (325 aa).

It belongs to the ATPase gamma chain family. In terms of assembly, F-type ATPases have 2 components, CF(1) - the catalytic core - and CF(0) - the membrane proton channel. CF(1) has five subunits: alpha(3), beta(3), gamma(1), delta(1), epsilon(1). CF(0) has three main subunits: a, b and c.

It localises to the cell membrane. Its function is as follows. Produces ATP from ADP in the presence of a proton gradient across the membrane. The gamma chain is believed to be important in regulating ATPase activity and the flow of protons through the CF(0) complex. The polypeptide is ATP synthase gamma chain (Corynebacterium diphtheriae (strain ATCC 700971 / NCTC 13129 / Biotype gravis)).